Consider the following 570-residue polypeptide: Dihydroxy-acid dehydratase (570 aa).

[2Fe-2S] cluster is bound at residue Cys-61. Residue Asp-94 coordinates Mg(2+). Cys-135 serves as a coordination point for [2Fe-2S] cluster. Mg(2+)-binding residues include Asp-136 and Lys-137. Lys-137 is modified (N6-carboxylysine). [2Fe-2S] cluster is bound at residue Cys-207. Mg(2+) is bound at residue Glu-459. Catalysis depends on Ser-485, which acts as the Proton acceptor.

It belongs to the IlvD/Edd family. Homodimer. [2Fe-2S] cluster serves as cofactor. Requires Mg(2+) as cofactor.

It carries out the reaction (2R)-2,3-dihydroxy-3-methylbutanoate = 3-methyl-2-oxobutanoate + H2O. It catalyses the reaction (2R,3R)-2,3-dihydroxy-3-methylpentanoate = (S)-3-methyl-2-oxopentanoate + H2O. It participates in amino-acid biosynthesis; L-isoleucine biosynthesis; L-isoleucine from 2-oxobutanoate: step 3/4. It functions in the pathway amino-acid biosynthesis; L-valine biosynthesis; L-valine from pyruvate: step 3/4. In terms of biological role, functions in the biosynthesis of branched-chain amino acids. Catalyzes the dehydration of (2R,3R)-2,3-dihydroxy-3-methylpentanoate (2,3-dihydroxy-3-methylvalerate) into 2-oxo-3-methylpentanoate (2-oxo-3-methylvalerate) and of (2R)-2,3-dihydroxy-3-methylbutanoate (2,3-dihydroxyisovalerate) into 2-oxo-3-methylbutanoate (2-oxoisovalerate), the penultimate precursor to L-isoleucine and L-valine, respectively. The polypeptide is Dihydroxy-acid dehydratase (Lactococcus lactis subsp. cremoris (strain SK11)).